Consider the following 497-residue polypeptide: MEKSWFNLILSKGELEYRCGLSKSMDSRLGPVENTTVNEDPTRNDTDKNIHDCSDSSSYYSKVDHLVDVKDIRNFISDDTFLIRDSNQDRYSIYFDSENQIFELNNDHSFLSELESFFYSYHNSSYMNNGSKNDEPHYHFNLYDNDTNCGWNNHINSCIDSYLRSQICIDSSILSGSDNSNDNYISNYICGEGGNSSEGKNFDIITRENGNDLTLKESSNDLDLYKDLWVQCECENCYGVNYKKSLNSKMNICEQCGYHLKMRSSDRIELSIDPGTWGPMDEDMISLDPIEFQSEEELYKDRIDFYQRKTGLTEAIQTGTGQLNGIPIAIGVMDFQFMGGSMGSVVGEKITRLIEYATNNFLPLILVCASGGARMQEGSLSLMQMAKISSALYDYQSNKKLFYVSILTSPTTGGVTASFGMLGDIIIAEPNAYIAFAGKRVIEQTLNKTIPEGSQAAEYLFHKGLFDPIVPRNPLKGVLSELVQLHGFFPLNQNSIK.

Residues 30–50 (GPVENTTVNEDPTRNDTDKNI) are disordered. The segment covering 40-50 (DPTRNDTDKNI) has biased composition (basic and acidic residues). Residues 230-497 (VQCECENCYG…FFPLNQNSIK (268 aa)) form the CoA carboxyltransferase N-terminal domain. Positions 232, 237, 253, and 256 each coordinate Zn(2+). The C4-type zinc finger occupies 232 to 256 (CECENCYGVNYKKSLNSKMNICEQC).

This sequence belongs to the AccD/PCCB family. In terms of assembly, acetyl-CoA carboxylase is a heterohexamer composed of biotin carboxyl carrier protein, biotin carboxylase and 2 subunits each of ACCase subunit alpha and ACCase plastid-coded subunit beta (accD). Zn(2+) serves as cofactor.

The protein resides in the plastid. It localises to the chloroplast stroma. It carries out the reaction N(6)-carboxybiotinyl-L-lysyl-[protein] + acetyl-CoA = N(6)-biotinyl-L-lysyl-[protein] + malonyl-CoA. It functions in the pathway lipid metabolism; malonyl-CoA biosynthesis; malonyl-CoA from acetyl-CoA: step 1/1. Its function is as follows. Component of the acetyl coenzyme A carboxylase (ACC) complex. Biotin carboxylase (BC) catalyzes the carboxylation of biotin on its carrier protein (BCCP) and then the CO(2) group is transferred by the transcarboxylase to acetyl-CoA to form malonyl-CoA. The sequence is that of Acetyl-coenzyme A carboxylase carboxyl transferase subunit beta, chloroplastic from Gossypium hirsutum (Upland cotton).